A 548-amino-acid polypeptide reads, in one-letter code: Thermosome subunit alpha (548 aa).

The tract at residues 527–548 (TKPEGGQGGGMPGGMGGMDMGM) is disordered. Residues 531–548 (GGQGGGMPGGMGGMDMGM) are compositionally biased toward gly residues.

The protein belongs to the TCP-1 chaperonin family. In terms of assembly, forms a Heterooligomeric complex of two stacked eight-membered rings.

Its function is as follows. Molecular chaperone; binds unfolded polypeptides in vitro, and has a weak ATPase activity. This Thermococcus sp. (strain JCM 11816 / KS-1) protein is Thermosome subunit alpha (thsA).